The following is an 842-amino-acid chain: Histidine biosynthesis trifunctional protein (842 aa).

A phosphoribosyl-AMP cyclohydrolase region spans residues 1 to 275 (MTFPLLPAYA…FVVEQTGVGF (275 aa)). Residues 276-357 (CHLERTSCFG…FYFALVRCAK (82 aa)) are phosphoribosyl-ATP pyrophosphohydrolase. The histidinol dehydrogenase stretch occupies residues 358-842 (YGVTLDEVER…KVRMEKLGLI (485 aa)). Positions 380–403 (KGDAKPGYTKEQPKEESKPKEVPS) are disordered. Residues 390–403 (EQPKEESKPKEVPS) show a composition bias toward basic and acidic residues. 2 residues coordinate Zn(2+): glutamine 667 and histidine 670. Catalysis depends on residues glutamate 736 and histidine 737. Positions 769 and 828 each coordinate Zn(2+).

The protein in the C-terminal section; belongs to the histidinol dehydrogenase family. Zn(2+) serves as cofactor.

The enzyme catalyses 1-(5-phospho-beta-D-ribosyl)-5'-AMP + H2O = 1-(5-phospho-beta-D-ribosyl)-5-[(5-phospho-beta-D-ribosylamino)methylideneamino]imidazole-4-carboxamide. It catalyses the reaction 1-(5-phospho-beta-D-ribosyl)-ATP + H2O = 1-(5-phospho-beta-D-ribosyl)-5'-AMP + diphosphate + H(+). The catalysed reaction is L-histidinol + 2 NAD(+) + H2O = L-histidine + 2 NADH + 3 H(+). It participates in amino-acid biosynthesis; L-histidine biosynthesis; L-histidine from 5-phospho-alpha-D-ribose 1-diphosphate: step 2/9. Its pathway is amino-acid biosynthesis; L-histidine biosynthesis; L-histidine from 5-phospho-alpha-D-ribose 1-diphosphate: step 3/9. It functions in the pathway amino-acid biosynthesis; L-histidine biosynthesis; L-histidine from 5-phospho-alpha-D-ribose 1-diphosphate: step 9/9. This is Histidine biosynthesis trifunctional protein (HIS4) from Komagataella pastoris (Yeast).